We begin with the raw amino-acid sequence, 260 residues long: Shikimate dehydrogenase (NADP(+)) (260 aa).

Shikimate is bound by residues 14–16 (SAS) and T60. The Proton acceptor role is filled by K64. 2 residues coordinate shikimate: N85 and D100. Residues 121 to 125 (GAGGA), 145 to 150 (NRTYER), and F201 each bind NADP(+). Y203 contacts shikimate. Residue G225 participates in NADP(+) binding.

Belongs to the shikimate dehydrogenase family. Homodimer.

The catalysed reaction is shikimate + NADP(+) = 3-dehydroshikimate + NADPH + H(+). The protein operates within metabolic intermediate biosynthesis; chorismate biosynthesis; chorismate from D-erythrose 4-phosphate and phosphoenolpyruvate: step 4/7. In terms of biological role, involved in the biosynthesis of the chorismate, which leads to the biosynthesis of aromatic amino acids. Catalyzes the reversible NADPH linked reduction of 3-dehydroshikimate (DHSA) to yield shikimate (SA). The polypeptide is Shikimate dehydrogenase (NADP(+)) (Pyrobaculum islandicum (strain DSM 4184 / JCM 9189 / GEO3)).